The chain runs to 127 residues: Large ribosomal subunit protein uL22 (127 aa).

Belongs to the universal ribosomal protein uL22 family. As to quaternary structure, part of the 50S ribosomal subunit.

Its function is as follows. This protein binds specifically to 23S rRNA; its binding is stimulated by other ribosomal proteins, e.g. L4, L17, and L20. It is important during the early stages of 50S assembly. It makes multiple contacts with different domains of the 23S rRNA in the assembled 50S subunit and ribosome. Functionally, the globular domain of the protein is located near the polypeptide exit tunnel on the outside of the subunit, while an extended beta-hairpin is found that lines the wall of the exit tunnel in the center of the 70S ribosome. This is Large ribosomal subunit protein uL22 from Methylorubrum extorquens (strain CM4 / NCIMB 13688) (Methylobacterium extorquens).